The sequence spans 338 residues: Nicotinate-nucleotide--dimethylbenzimidazole phosphoribosyltransferase (338 aa).

Catalysis depends on Glu-306, which acts as the Proton acceptor.

Belongs to the CobT family.

The catalysed reaction is 5,6-dimethylbenzimidazole + nicotinate beta-D-ribonucleotide = alpha-ribazole 5'-phosphate + nicotinate + H(+). It participates in nucleoside biosynthesis; alpha-ribazole biosynthesis; alpha-ribazole from 5,6-dimethylbenzimidazole: step 1/2. Catalyzes the synthesis of alpha-ribazole-5'-phosphate from nicotinate mononucleotide (NAMN) and 5,6-dimethylbenzimidazole (DMB). The sequence is that of Nicotinate-nucleotide--dimethylbenzimidazole phosphoribosyltransferase from Cereibacter sphaeroides (strain ATCC 17025 / ATH 2.4.3) (Rhodobacter sphaeroides).